The primary structure comprises 1241 residues: DNA-directed RNA polymerase subunit beta (1241 aa).

The disordered stretch occupies residues 1201 to 1224 (AEEEQDTDVDYITEDDFESPDPEI).

Belongs to the RNA polymerase beta chain family. As to quaternary structure, the RNAP catalytic core consists of 2 alpha, 1 beta, 1 beta' and 1 omega subunit. When a sigma factor is associated with the core the holoenzyme is formed, which can initiate transcription.

It carries out the reaction RNA(n) + a ribonucleoside 5'-triphosphate = RNA(n+1) + diphosphate. In terms of biological role, DNA-dependent RNA polymerase catalyzes the transcription of DNA into RNA using the four ribonucleoside triphosphates as substrates. This is DNA-directed RNA polymerase subunit beta from Alkaliphilus oremlandii (strain OhILAs) (Clostridium oremlandii (strain OhILAs)).